We begin with the raw amino-acid sequence, 269 residues long: Zinc import ATP-binding protein ZnuC (269 aa).

The region spanning 6-221 (VRLTQVGVSF…PAFVELFGQD (216 aa)) is the ABC transporter domain. ATP is bound at residue 38-45 (GPNGAGKT).

It belongs to the ABC transporter superfamily. Zinc importer (TC 3.A.1.15.5) family. The complex is composed of two ATP-binding proteins (ZnuC), two transmembrane proteins (ZnuB) and a solute-binding protein (ZnuA).

The protein localises to the cell inner membrane. It catalyses the reaction Zn(2+)(out) + ATP(in) + H2O(in) = Zn(2+)(in) + ADP(in) + phosphate(in) + H(+)(in). Functionally, part of the ABC transporter complex ZnuABC involved in zinc import. Responsible for energy coupling to the transport system. In Pseudomonas aeruginosa (strain UCBPP-PA14), this protein is Zinc import ATP-binding protein ZnuC.